Consider the following 608-residue polypeptide: Serine/threonine-protein kinase ROP17 (608 aa).

The N-terminal stretch at 1–21 (MELVLCFVIITISGVIRESSA) is a signal peptide. Asparagine 76 carries an N-linked (GlcNAc...) asparagine glycan. Positions 283–579 (LKKRGFLGGG…QQALEQFSLL (297 aa)) constitute a Protein kinase domain. ATP-binding positions include 289–297 (LGGGGFGLV) and lysine 312. Catalysis depends on aspartate 436, which acts as the Proton acceptor.

It belongs to the protein kinase superfamily. Ser/Thr protein kinase family. As to quaternary structure, interacts with ROP5; interaction with ROP5 does not affect kinase activity. Interacts with human BCL2; the interaction probably promotes BCL2 phosphorylation and degradation.

The protein localises to the secreted. It is found in the cytoplasmic vesicle. The protein resides in the secretory vesicle. Its subcellular location is the rhoptry. It localises to the parasitophorous vacuole membrane. The catalysed reaction is L-threonyl-[protein] + ATP = O-phospho-L-threonyl-[protein] + ADP + H(+). It carries out the reaction L-seryl-[protein] + ATP = O-phospho-L-seryl-[protein] + ADP + H(+). Its function is as follows. Protein kinase. Virulence factor. Promotes migration of Toxoplasma-infected macrophages through collagen matrix, facilitating parasite transport through tissues and systemic dissemination. Plays a role in the translocation of dense granule effectors, such as GRA16 and GRA24, across the parasitophorous vacuole membrane in Toxoplasma-infected host cells. Phosphorylates mouse IRGB6 (TGTP1/TGTP2), an immunity-related GTPase (IRG) that protects mice from infection by certain intracellular pathogens; the phosphorylation leads to the disassembly of IRGB6 polymers into monomers and dimers. May modulate gene expression in human cells. Promotes autophagy in human cells via modulation of the BCL2-BECN1 pathway. The polypeptide is Serine/threonine-protein kinase ROP17 (Toxoplasma gondii).